Here is a 124-residue protein sequence, read N- to C-terminus: Large ribosomal subunit protein bL12 (124 aa).

The protein belongs to the bacterial ribosomal protein bL12 family. In terms of assembly, homodimer. Part of the ribosomal stalk of the 50S ribosomal subunit. Forms a multimeric L10(L12)X complex, where L10 forms an elongated spine to which 2 to 4 L12 dimers bind in a sequential fashion. Binds GTP-bound translation factors.

Functionally, forms part of the ribosomal stalk which helps the ribosome interact with GTP-bound translation factors. Is thus essential for accurate translation. In Cupriavidus taiwanensis (strain DSM 17343 / BCRC 17206 / CCUG 44338 / CIP 107171 / LMG 19424 / R1) (Ralstonia taiwanensis (strain LMG 19424)), this protein is Large ribosomal subunit protein bL12.